A 313-amino-acid polypeptide reads, in one-letter code: Formate-nitrite transporter (313 aa).

Residues 1-46 (MTKGSKYTIDPISVKTACTSEESYIRCVEYGKGKAHYPNLSLLAKA) lie on the Cytoplasmic side of the membrane. A helical transmembrane segment spans residues 47-67 (ILAGVFVGVCAHASGIAGGHF). The Extracellular segment spans residues 68-77 (YYHKLREHVG). The chain crosses the membrane as a helical span at residues 78 to 98 (ISMSAFVYGFTFPIAFLCIIA). The Cytoplasmic portion of the chain corresponds to 99–127 (TGSDLFTGNTLAVTTALLQRKVTLLEYLR). Residues 128 to 148 (VMSISLFGNYVGAVSFAFFVS) traverse the membrane as a helical segment. At 149–184 (HLSGAFKKHEEIGKNHIFQFLNDIAEKKVSHTFVQC) the chain is on the extracellular side. A helical transmembrane segment spans residues 185–205 (VCLAIGCNIFVCLAVYFVLTI). Residues 206–210 (KDGSG) are Cytoplasmic-facing. The helical transmembrane segment at 211-231 (MVFSVFFAVYAFAIAGYEHII) threads the bilayer. Over 232 to 256 (ANMYTLNLALMIEANVDWTKVYVDN) the chain is Extracellular. The chain crosses the membrane as a helical span at residues 257–277 (LLPTLIGNYIAGAIVLACPLF). The Cytoplasmic segment spans residues 278–313 (YIYRHSYSDYEKTRGDGGNSGLKSLSIEMQNGSSGR). The segment at 290–313 (TRGDGGNSGLKSLSIEMQNGSSGR) is disordered. The segment covering 298–313 (GLKSLSIEMQNGSSGR) has biased composition (polar residues).

The protein belongs to the FNT transporter (TC 1.A.16) family. In terms of assembly, homopentamer.

Its subcellular location is the cell membrane. It localises to the vacuole membrane. It catalyses the reaction (S)-lactate(in) + H(+)(in) = (S)-lactate(out) + H(+)(out). The catalysed reaction is formate(in) + H(+)(in) = formate(out) + H(+)(out). The enzyme catalyses pyruvate(out) + H(+)(out) = pyruvate(in) + H(+)(in). It carries out the reaction acetate(out) + H(+)(out) = acetate(in) + H(+)(in). Inhibited by the Malaria Box compound MMV007839 and its derivatives BH296 and BH267.meta. Its function is as follows. Monocarboxylate-proton symporter that mediates the efflux of the waste product lactate in the intraerythrocytic parasites; active in acidic-to-neutral pH range. Transports L-lactate. This Plasmodium vivax protein is Formate-nitrite transporter.